The chain runs to 354 residues: Guanine nucleotide-binding protein alpha-12 subunit (354 aa).

One can recognise a G-alpha domain in the interval 31 to 354; that stretch reads QPLKLLLLGS…SLLMNVAEIL (324 aa). Residues 34–47 form a G1 motif region; it reads KLLLLGSGECGKST. Residues 39–46, 178–184, 203–207, 272–275, and Ala329 contribute to the GTP site; these read GSGECGKS, LRVRVKT, DVGGQ, and NKID. The Mg(2+) site is built by Ser46 and Thr184. Residues 176–184 form a G2 motif region; it reads DFLRVRVKT. The G3 motif stretch occupies residues 199-208; it reads FKLVDVGGQK. Positions 268–275 are G4 motif; the sequence is VLFFNKID. The tract at residues 327-332 is G5 motif; that stretch reads TCALDS.

It belongs to the G-alpha family. G proteins are composed of 3 units; alpha, beta and gamma. The alpha chain contains the guanine nucleotide binding site.

In terms of biological role, guanine nucleotide-binding proteins (G proteins) are involved as modulators or transducers in various transmembrane signaling systems. This chain is Guanine nucleotide-binding protein alpha-12 subunit (gpaL), found in Dictyostelium discoideum (Social amoeba).